The chain runs to 468 residues: 3-isopropylmalate dehydratase large subunit (468 aa).

Residues cysteine 348, cysteine 409, and cysteine 412 each contribute to the [4Fe-4S] cluster site.

Belongs to the aconitase/IPM isomerase family. LeuC type 1 subfamily. In terms of assembly, heterodimer of LeuC and LeuD. [4Fe-4S] cluster is required as a cofactor.

It catalyses the reaction (2R,3S)-3-isopropylmalate = (2S)-2-isopropylmalate. It participates in amino-acid biosynthesis; L-leucine biosynthesis; L-leucine from 3-methyl-2-oxobutanoate: step 2/4. Functionally, catalyzes the isomerization between 2-isopropylmalate and 3-isopropylmalate, via the formation of 2-isopropylmaleate. In Dechloromonas aromatica (strain RCB), this protein is 3-isopropylmalate dehydratase large subunit.